The sequence spans 222 residues: MSHLVKMENGQSQTIQEMLGCIERYNPDHLKTLESYVQDQAKNNTYDLEANLAVLKLYQFNPHMLNFDITYTILLKSLTSLPHTDFVMAKCLLLPQQMKDENVQTIIDLADILERADFTLFWQRAEVNRNMFRHIAGFHDSIRKFVSHVVGTTFQTIRKDLLKELLGGIEDSTLESWIKRNGWKNQGQGLVIVAMQDDKIKTKNITEKIEFDNVGALMAQCL.

The PCI domain occupies 46-208 (YDLEANLAVL…KIKTKNITEK (163 aa)).

It belongs to the eIF-3 subunit K family. In terms of assembly, component of the eukaryotic translation initiation factor 3 (eIF-3) complex. The eIF-3 complex interacts with pix.

The protein localises to the cytoplasm. Its function is as follows. Component of the eukaryotic translation initiation factor 3 (eIF-3) complex, which is involved in protein synthesis of a specialized repertoire of mRNAs and, together with other initiation factors, stimulates binding of mRNA and methionyl-tRNAi to the 40S ribosome. The eIF-3 complex specifically targets and initiates translation of a subset of mRNAs involved in cell proliferation. This is Eukaryotic translation initiation factor 3 subunit K from Drosophila sechellia (Fruit fly).